We begin with the raw amino-acid sequence, 56 residues long: uncharacterized protein (56 aa).

This is an uncharacterized protein from Escherichia coli (strain K12).